Here is a 105-residue protein sequence, read N- to C-terminus: Large ribosomal subunit protein uL24 (105 aa).

This sequence belongs to the universal ribosomal protein uL24 family. Part of the 50S ribosomal subunit.

In terms of biological role, one of two assembly initiator proteins, it binds directly to the 5'-end of the 23S rRNA, where it nucleates assembly of the 50S subunit. One of the proteins that surrounds the polypeptide exit tunnel on the outside of the subunit. The protein is Large ribosomal subunit protein uL24 of Thermotoga maritima (strain ATCC 43589 / DSM 3109 / JCM 10099 / NBRC 100826 / MSB8).